A 582-amino-acid chain; its full sequence is uncharacterized protein (582 aa).

Residues 1-23 (MAHEGSRQVRDRGVTRSKAEKVR) show a composition bias toward basic and acidic residues. Disordered regions lie at residues 1–29 (MAHE…TVPV), 110–133 (AVAE…SWAQ), and 147–221 (LENF…SSAG). Serine 242 bears the Phosphoserine mark. Disordered regions lie at residues 310 to 331 (RPSA…SAHH) and 551 to 582 (LSSG…PKPR). Over residues 311–320 (PSASCQQQRA) the composition is skewed to polar residues.

This is an uncharacterized protein from Homo sapiens (Human).